The chain runs to 162 residues: MAAGQGGWLRPALGLRLLLATAFQAVSALGAEFASEACRELGFSSNLLCSSCDLLGQFNLLPLDPVCRGCCQEEAQFETKKLYAGAILEVCGUKLGRFPQVQAFVRSDKPKLFRGLQIKYVRGSDPVLKLLDDNGNIAEELSILKWNTDSVEEFLSEKLERI.

Residues 1 to 28 (MAAGQGGWLRPALGLRLLLATAFQAVSA) form the signal peptide. Residue Sec-93 is a non-standard amino acid, selenocysteine.

It belongs to the selenoprotein M/F family. Forms a tight complex with UGGT1/UGCGL1. Interacts with UGGT2/UGCGL2. Interacts with RDH11.

The protein resides in the endoplasmic reticulum lumen. Functionally, may be involved in redox reactions associated with the formation of disulfide bonds. May contribute to the quality control of protein folding in the endoplasmic reticulum. May regulate protein folding by enhancing the catalytic activity of UGGT1/UGCGL1 and UGGT2/UGCGL2. In Mus musculus (Mouse), this protein is Selenoprotein F.